The sequence spans 491 residues: (1S)-1-hydroxy-luvungin A synthase CYP88A37 (491 aa).

A helical transmembrane segment spans residues 5 to 25 (FSWLILALAIFIGTYAFVFGV). Residue C439 coordinates heme.

This sequence belongs to the cytochrome P450 family. Requires heme as cofactor. Expressed in maturing fruits and in juice vesicles.

Its subcellular location is the membrane. It catalyses the reaction luvungin A + reduced [NADPH--hemoprotein reductase] + O2 = (1S)-1-hydroxy-luvungin A + oxidized [NADPH--hemoprotein reductase] + H2O + H(+). It participates in secondary metabolite biosynthesis; terpenoid biosynthesis. Its function is as follows. Monooxygenase involved in the biosynthesis of limonoids triterpene natural products such as limonin, a compound with insecticidal activity responsible for the bitter taste in citrus. Catalyzes the conversion of luvungin A to (1S)-1-hydroxy-luvungin A. In Citrus sinensis (Sweet orange), this protein is (1S)-1-hydroxy-luvungin A synthase CYP88A37.